Reading from the N-terminus, the 643-residue chain is ATP-dependent RNA helicase DeaD (643 aa).

The Q motif motif lies at 6 to 34 (TTFADLGLKAPILEALTDLGYEKPSPIQA). The 172-residue stretch at 37-208 (IPHLLDGRDV…RRFMKEPQEV (172 aa)) folds into the Helicase ATP-binding domain. 50 to 57 (AQTGSGKT) lines the ATP pocket. The short motif at 156–159 (DEAD) is the DEAD box element. A Helicase C-terminal domain is found at 232–379 (KNEALVRFLE…EVELPNAELL (148 aa)). 2 disordered regions span residues 440–482 (VPPV…KRER) and 557–643 (MNMQ…GGDA). Composition is skewed to basic and acidic residues over residues 448–482 (PRREFRDRDDSFDRRGDRNDRGPRGDREDRPKRER) and 567–643 (PRTE…GGDA).

Belongs to the DEAD box helicase family. DeaD/CsdA subfamily.

The protein localises to the cytoplasm. The enzyme catalyses ATP + H2O = ADP + phosphate + H(+). DEAD-box RNA helicase involved in various cellular processes at low temperature, including ribosome biogenesis, mRNA degradation and translation initiation. In Klebsiella pneumoniae, this protein is ATP-dependent RNA helicase DeaD.